A 328-amino-acid chain; its full sequence is Eukaryotic translation initiation factor 3 subunit I (328 aa).

WD repeat units lie at residues 8–47 (GHER…RLGT), 50–91 (GHQG…GTIP), 148–187 (SIQT…ELNS), 190–229 (DHTG…CLKT), and 287–328 (GHFG…FVFE).

Belongs to the eIF-3 subunit I family. Component of the eukaryotic translation initiation factor 3 (eIF-3) complex.

It localises to the cytoplasm. Its function is as follows. Component of the eukaryotic translation initiation factor 3 (eIF-3) complex, which is involved in protein synthesis of a specialized repertoire of mRNAs and, together with other initiation factors, stimulates binding of mRNA and methionyl-tRNAi to the 40S ribosome. The eIF-3 complex specifically targets and initiates translation of a subset of mRNAs involved in cell proliferation. The chain is Eukaryotic translation initiation factor 3 subunit I from Culex quinquefasciatus (Southern house mosquito).